Reading from the N-terminus, the 450-residue chain is Phosphoglucosamine mutase (450 aa).

Serine 101 (phosphoserine intermediate) is an active-site residue. Mg(2+) is bound by residues serine 101, aspartate 242, aspartate 244, and aspartate 246. Serine 101 is modified (phosphoserine).

This sequence belongs to the phosphohexose mutase family. Mg(2+) serves as cofactor. Activated by phosphorylation.

The catalysed reaction is alpha-D-glucosamine 1-phosphate = D-glucosamine 6-phosphate. Catalyzes the conversion of glucosamine-6-phosphate to glucosamine-1-phosphate. In Rhodopseudomonas palustris (strain TIE-1), this protein is Phosphoglucosamine mutase.